The sequence spans 437 residues: Adenylosuccinate synthetase (437 aa).

GTP-binding positions include 12 to 18 (GDEGKGK) and 40 to 42 (GHT). Catalysis depends on D13, which acts as the Proton acceptor. The Mg(2+) site is built by D13 and G40. IMP-binding positions include 13–16 (DEGK), 38–41 (NAGH), T131, R145, Q225, and T240. The active-site Proton donor is H41. Positions 281–304 (TELLGADGKPDADGERLGTRGHEF) are disordered. Basic and acidic residues predominate over residues 288–303 (GKPDADGERLGTRGHE). 306–312 (TTTGRQR) lines the substrate pocket. R310 contributes to the IMP binding site. Residues R312, 338-340 (KLD), and 420-422 (STS) contribute to the GTP site.

Belongs to the adenylosuccinate synthetase family. Homodimer. Requires Mg(2+) as cofactor.

The protein localises to the cytoplasm. The enzyme catalyses IMP + L-aspartate + GTP = N(6)-(1,2-dicarboxyethyl)-AMP + GDP + phosphate + 2 H(+). Its pathway is purine metabolism; AMP biosynthesis via de novo pathway; AMP from IMP: step 1/2. Functionally, plays an important role in the de novo pathway of purine nucleotide biosynthesis. Catalyzes the first committed step in the biosynthesis of AMP from IMP. The chain is Adenylosuccinate synthetase from Ruegeria sp. (strain TM1040) (Silicibacter sp.).